The chain runs to 198 residues: LexA repressor (198 aa).

A DNA-binding region (H-T-H motif) is located at residues 28–47 (IRDIAKHFKLTPRGAHIHVL). Catalysis depends on for autocatalytic cleavage activity residues serine 120 and lysine 157.

The protein belongs to the peptidase S24 family. Homodimer.

It catalyses the reaction Hydrolysis of Ala-|-Gly bond in repressor LexA.. Its function is as follows. Represses a number of genes involved in the response to DNA damage (SOS response), including recA and lexA. In the presence of single-stranded DNA, RecA interacts with LexA causing an autocatalytic cleavage which disrupts the DNA-binding part of LexA, leading to derepression of the SOS regulon and eventually DNA repair. This Thermosipho africanus (strain TCF52B) protein is LexA repressor.